We begin with the raw amino-acid sequence, 118 residues long: Succinate dehydrogenase assembly factor 1, mitochondrial (118 aa).

Residues 14-16 (LYR) carry the LYR motif 1; required for interaction with HSC20 motif. The LYR motif 2; not required for interaction with HSC20 signature appears at 53–55 (LYR). Residues 53–65 (LYRRGRRQLQMLR) are interaction with SDHB. The segment at 72–118 (MGAFVRTRGPTEESNGAGAPGTLSGEGDDPRKPLDSMRTPKTPLDGR) is disordered.

It belongs to the complex I LYR family. SDHAF1 subfamily. As to quaternary structure, interacts with SDHB within an SDHA-SDHB subcomplex. Also interacts with the iron-sulfur transfer complex formed by HSC20, HSPA9 and ISCU through direct binding to HSC20. Binding of SDHAF1 to SDHB precedes and is necessary for recruitment of the iron-sulfur transfer complex by SDHAF1.

It is found in the mitochondrion matrix. In terms of biological role, plays an essential role in the assembly of succinate dehydrogenase (SDH), an enzyme complex (also referred to as respiratory complex II) that is a component of both the tricarboxylic acid (TCA) cycle and the mitochondrial electron transport chain, and which couples the oxidation of succinate to fumarate with the reduction of ubiquinone (coenzyme Q) to ubiquinol. Promotes maturation of the iron-sulfur protein subunit SDHB of the SDH catalytic dimer, protecting it from the deleterious effects of oxidants. May act together with SDHAF3. Contributes to iron-sulfur cluster incorporation into SDHB by binding to SDHB and recruiting the iron-sulfur transfer complex formed by HSC20, HSPA9 and ISCU through direct binding to HSC20. This chain is Succinate dehydrogenase assembly factor 1, mitochondrial, found in Bos taurus (Bovine).